Consider the following 189-residue polypeptide: UPF0340 protein EF_1967 (189 aa).

Belongs to the UPF0340 family.

In Enterococcus faecalis (strain ATCC 700802 / V583), this protein is UPF0340 protein EF_1967.